The primary structure comprises 259 residues: MNIDPVALKIGLLEIRWYSLAYIIGILFAYWYVQKIDKYKVFTPESYKSIISWWVTGMILGGRIGYILFYNLNFYMSFPIEMFKLWKGGMSFHGASLGLFCTMYIFCKKYKIKFLSAIDLCLCAVPVGIFLGRIANFINGELYGKVTNTRFGMIFQNSGDFFYRHPSQLYEAFFEGLLLFVVMNLLFFFTKVKSYQGMLFSIFMIWYGIVRFFIEFVREPDVQVGYILFNWITMGQLLSFIMVILGICILRLSRMSHNI.

4 consecutive transmembrane segments (helical) span residues 10-30, 50-70, 86-106, and 112-132; these read IGLL…LFAY, IISW…ILFY, WKGG…MYIF, and IKFL…IFLG. Arg133 is a binding site for a 1,2-diacyl-sn-glycero-3-phospho-(1'-sn-glycerol). Helical transmembrane passes span 169-189, 197-217, and 227-247; these read LYEA…LFFF, GMLF…IEFV, and ILFN…ILGI.

This sequence belongs to the Lgt family.

The protein localises to the cell inner membrane. The catalysed reaction is L-cysteinyl-[prolipoprotein] + a 1,2-diacyl-sn-glycero-3-phospho-(1'-sn-glycerol) = an S-1,2-diacyl-sn-glyceryl-L-cysteinyl-[prolipoprotein] + sn-glycerol 1-phosphate + H(+). It functions in the pathway protein modification; lipoprotein biosynthesis (diacylglyceryl transfer). Catalyzes the transfer of the diacylglyceryl group from phosphatidylglycerol to the sulfhydryl group of the N-terminal cysteine of a prolipoprotein, the first step in the formation of mature lipoproteins. The chain is Phosphatidylglycerol--prolipoprotein diacylglyceryl transferase from Ehrlichia ruminantium (strain Welgevonden).